A 296-amino-acid chain; its full sequence is Light-independent protochlorophyllide reductase iron-sulfur ATP-binding protein (296 aa).

The span at 1 to 11 (MTSTITRKEDG) shows a compositional bias: basic and acidic residues. The segment at 1-20 (MTSTITRKEDGEGSVQVKQD) is disordered. ATP-binding positions include 39-44 (GIGKST) and lysine 68. Position 43 (serine 43) interacts with Mg(2+). Residues cysteine 124 and cysteine 158 each contribute to the [4Fe-4S] cluster site. 209–210 (NR) contributes to the ATP binding site.

Belongs to the NifH/BchL/ChlL family. Homodimer. Protochlorophyllide reductase is composed of three subunits; ChlL, ChlN and ChlB. It depends on [4Fe-4S] cluster as a cofactor.

It catalyses the reaction chlorophyllide a + oxidized 2[4Fe-4S]-[ferredoxin] + 2 ADP + 2 phosphate = protochlorophyllide a + reduced 2[4Fe-4S]-[ferredoxin] + 2 ATP + 2 H2O. The protein operates within porphyrin-containing compound metabolism; chlorophyll biosynthesis (light-independent). Component of the dark-operative protochlorophyllide reductase (DPOR) that uses Mg-ATP and reduced ferredoxin to reduce ring D of protochlorophyllide (Pchlide) to form chlorophyllide a (Chlide). This reaction is light-independent. The L component serves as a unique electron donor to the NB-component of the complex, and binds Mg-ATP. This is Light-independent protochlorophyllide reductase iron-sulfur ATP-binding protein from Prochlorococcus marinus (strain NATL1A).